We begin with the raw amino-acid sequence, 408 residues long: UDP-N-acetylglucosamine--N-acetylmuramyl-(pentapeptide) pyrophosphoryl-undecaprenol N-acetylglucosamine transferase (408 aa).

The tract at residues Met1–Gly20 is disordered. Residues Thr41–Gly43, Asn160, Arg197, Ser231, and Gln327 contribute to the UDP-N-acetyl-alpha-D-glucosamine site.

The protein belongs to the glycosyltransferase 28 family. MurG subfamily.

It is found in the cell membrane. It carries out the reaction di-trans,octa-cis-undecaprenyl diphospho-N-acetyl-alpha-D-muramoyl-L-alanyl-D-glutamyl-meso-2,6-diaminopimeloyl-D-alanyl-D-alanine + UDP-N-acetyl-alpha-D-glucosamine = di-trans,octa-cis-undecaprenyl diphospho-[N-acetyl-alpha-D-glucosaminyl-(1-&gt;4)]-N-acetyl-alpha-D-muramoyl-L-alanyl-D-glutamyl-meso-2,6-diaminopimeloyl-D-alanyl-D-alanine + UDP + H(+). Its pathway is cell wall biogenesis; peptidoglycan biosynthesis. Its function is as follows. Cell wall formation. Catalyzes the transfer of a GlcNAc subunit on undecaprenyl-pyrophosphoryl-MurNAc-pentapeptide (lipid intermediate I) to form undecaprenyl-pyrophosphoryl-MurNAc-(pentapeptide)GlcNAc (lipid intermediate II). The sequence is that of UDP-N-acetylglucosamine--N-acetylmuramyl-(pentapeptide) pyrophosphoryl-undecaprenol N-acetylglucosamine transferase from Mycolicibacterium paratuberculosis (strain ATCC BAA-968 / K-10) (Mycobacterium paratuberculosis).